The sequence spans 222 residues: Leucyl/phenylalanyl-tRNA--protein transferase (222 aa).

The protein belongs to the L/F-transferase family.

It localises to the cytoplasm. It catalyses the reaction N-terminal L-lysyl-[protein] + L-leucyl-tRNA(Leu) = N-terminal L-leucyl-L-lysyl-[protein] + tRNA(Leu) + H(+). The catalysed reaction is N-terminal L-arginyl-[protein] + L-leucyl-tRNA(Leu) = N-terminal L-leucyl-L-arginyl-[protein] + tRNA(Leu) + H(+). The enzyme catalyses L-phenylalanyl-tRNA(Phe) + an N-terminal L-alpha-aminoacyl-[protein] = an N-terminal L-phenylalanyl-L-alpha-aminoacyl-[protein] + tRNA(Phe). In terms of biological role, functions in the N-end rule pathway of protein degradation where it conjugates Leu, Phe and, less efficiently, Met from aminoacyl-tRNAs to the N-termini of proteins containing an N-terminal arginine or lysine. The protein is Leucyl/phenylalanyl-tRNA--protein transferase of Legionella pneumophila (strain Paris).